Reading from the N-terminus, the 226-residue chain is Ribonuclease 3 (226 aa).

An RNase III domain is found at 7–129; sequence LARLSRTLGY…IIGAVYLDAN (123 aa). A Mg(2+)-binding site is contributed by E42. The active site involves D46. The Mg(2+) site is built by D115 and E118. Residue E118 is part of the active site. The DRBM domain maps to 156-226; sequence DPKTILQEYL…AAQILELINK (71 aa).

It belongs to the ribonuclease III family. In terms of assembly, homodimer. Mg(2+) serves as cofactor.

It is found in the cytoplasm. The enzyme catalyses Endonucleolytic cleavage to 5'-phosphomonoester.. Its function is as follows. Digests double-stranded RNA. Involved in the processing of primary rRNA transcript to yield the immediate precursors to the large and small rRNAs (23S and 16S). Processes some mRNAs, and tRNAs when they are encoded in the rRNA operon. Processes pre-crRNA and tracrRNA of type II CRISPR loci if present in the organism. The polypeptide is Ribonuclease 3 (Shewanella denitrificans (strain OS217 / ATCC BAA-1090 / DSM 15013)).